The sequence spans 1068 residues: Rho family-interacting cell polarization regulator 2 (1068 aa).

Phosphoserine; in isoform is present on residues Ser21 and Ser37. A disordered region spans residues 45–73; that stretch reads LKKPQAKLKKMHNLGHKNNNPPKEPQPKR. Residues 48–59 are compositionally biased toward basic residues; it reads PQAKLKKMHNLG. The tract at residues 55–113 is involved in cell filopodia formation; it reads MHNLGHKNNNPPKEPQPKRVEEVYRALKNGLDEYLEVHQTELDKLTAQLKDMKRNSRLG. A coiled-coil region spans residues 83-112; it reads NGLDEYLEVHQTELDKLTAQLKDMKRNSRL. The residue at position 341 (Ser341) is a Phosphoserine; in isoform 2. The segment covering 474-491 has biased composition (polar residues); the sequence is QNEGMDDTSSASSRNSLG. The tract at residues 474–524 is disordered; that stretch reads QNEGMDDTSSASSRNSLGEGQEPKSHLKEEDPEEPRKPASAPSEACRRQSS. Over residues 494 to 510 the composition is skewed to basic and acidic residues; sequence QEPKSHLKEEDPEEPRK. Position 523 is a phosphoserine; in isoform 2 (Ser523). Ser573 is modified (phosphoserine). The residue at position 585 (Ser585) is a Phosphoserine; in isoform 2. Residues 768–793 adopt a coiled-coil conformation; it reads VARSLLEKLSRQIQVMEKLAAVSDEN.

Belongs to the RIPOR family. Homooligomer; homooligomerization is regulated by RHOC and leads to the formation of concatemers through the association of N- and C-termini. Interacts with 14-3-3 proteins; these interactions occur during myogenic cell differentiation. Interacts with HDAC6; this interaction occurs during early myogenic differentiation and prevents HDAC6 to deacetylate tubulin. Interacts with DYSF; this interaction occurs during early myogenic differentiation. Interacts with MYOF. Interacts with RHOC. Isoform 1 and isoform 2 interact (via active GTP- or inactive GDP-bound forms) with RHOA; these interactions are direct, block the loading of GTP to RHOA and decrease upon chemokine CCL19 stimulation in primary T lymphocytes. Isoform 2 interacts (phosphorylated form) with HDAC6; this interaction induces T cell proliferation arrest. Isoform 2 interacts (phosphorylated form) with 14-3-3 proteins; these interactions induces T cell proliferation arrest. Isoform 2 interacts with 14-3-3 proteins. Isoform 2 interacts (via phosphorylated form) with YWHAB; this interaction occurs in a chemokine-dependent manner and does not compete for binding of RIPOR2 with RHOA nor blocks inhibition of RIPOR2-mediated RHOA activity. Isoform 2 interacts with YWHAE. Isoform 2 interacts with YWHAQ. In terms of processing, phosphorylated. Isoform 2 is phosphorylated in T cells. Chemokine-induced phosphorylation of isoform 2 in neutrophils occurs in a PKC- and AKT-dependent manner, resulting in RIPOR2 interaction with YWHAB and stabilization. Isoform 2 is phosphorylated by PKCA, AKT1 and MAPKAPK1A; in vitro. Post-translationally, acetylated during myogenic differentiation. As to expression, expressed in primary fetal mononuclear myoblast. Expressed strongly in naive T lymphocytes. Expressed weakly in activated T lymphocytes (at protein level). Expressed in blood cells and adult tissues of hematopoietic origin, such as the secondary lymphoid organs. Expressed in cytotrophoblast.

The protein resides in the cytoplasm. It is found in the cytoskeleton. Its subcellular location is the cell projection. The protein localises to the filopodium. It localises to the stereocilium. The protein resides in the stereocilium membrane. It is found in the apical cell membrane. Acts as an inhibitor of the small GTPase RHOA and plays several roles in the regulation of myoblast and hair cell differentiation, lymphocyte T proliferation and neutrophil polarization. Inhibits chemokine-induced T lymphocyte responses, such as cell adhesion, polarization and migration. Involved also in the regulation of neutrophil polarization, chemotaxis and adhesion. Required for normal development of inner and outer hair cell stereocilia within the cochlea of the inner ear. Plays a role for maintaining the structural organization of the basal domain of stereocilia. Involved in mechanosensory hair cell function. Required for normal hearing. Its function is as follows. Acts as an inhibitor of the small GTPase RHOA. Plays a role in fetal mononuclear myoblast differentiation by promoting filopodia and myotube formation. Maintains naive T lymphocytes in a quiescent state. In Homo sapiens (Human), this protein is Rho family-interacting cell polarization regulator 2 (RIPOR2).